The chain runs to 235 residues: Probable transcriptional regulatory protein MPN_478 (235 aa).

It belongs to the TACO1 family.

It is found in the cytoplasm. In Mycoplasma pneumoniae (strain ATCC 29342 / M129 / Subtype 1) (Mycoplasmoides pneumoniae), this protein is Probable transcriptional regulatory protein MPN_478.